Consider the following 427-residue polypeptide: Homeotic protein caudal (427 aa).

The segment at 104 to 273 (QLMQQHHHHH…QPQPGKTRTK (170 aa)) is disordered. The segment covering 116–129 (ASSSSASSGSSSSG) has biased composition (low complexity). A compositionally biased stretch (gly residues) spans 145–164 (GVGGAGGGGGVGGATDGGPG). Residues 183–195 (ITVSGSEISSPGA) are compositionally biased toward polar residues. The segment covering 209 to 243 (HLSAVANNNNNNNNNNNSPSTHNNNNNNNSVSNNN) has biased composition (low complexity). The residue at position 245 (Thr245) is a Phosphothreonine. Residues 252 to 257 (YFDWMK) carry the Antp-type hexapeptide motif. Positions 273 to 332 (KDKYRVVYTDFQRLELEKEYCTSRYITIRRKSELAQTLSLSERQVKIWFQNRRAKERKQN) form a DNA-binding region, homeobox.

It belongs to the Caudal homeobox family. In terms of tissue distribution, maternally localized in an anteroposterior gradient in the syncytial blastoderm. Also expressed in the pole cells. Zygotically localized in the primordia of the terminal abdominal segment, the hindgut and in the posterior midgut rudiment. Expressed in the gut, the gonads and parts of the genital disks of third instar larvae (at protein level).

The protein localises to the nucleus. Caudal (cad) is one of a number of transcription factors controlling segmentation of the embryo. Further transcriptional regulation via a 5' flanking region containing DNA replication-related elements (DRE) and by dref also regulated by trh and tgo via the CNS midline element. Alongside Bicoid (bcd), caudal forms concentration gradients down the anterior-posterior (A-P) axis providing positional information and subsequent induction of the gap genes. Plays a role in gastrulation/germ band extension, hindgut morphogenesis, positive regulation of cell proliferation, genital disk development and pattern formation. Acts as a key regulator of the Hox gene network and activates transcription via the downstream core promoter element (DPE) relative to the TATA box. Plays a role in the establishment of the hindgut and in the invagination of the hindgut primordium during gastrulation. These effects on the gut are achieved by acting combinatorially at the posterior of the embryo to activate transcription of different targets including fog, fkh and wg. Caudal is involved in regulation of proliferation through transactivation of the E2F gene. Postembryonically its function is mostly restricted to the intestine where it regulates antimicrobial peptide (AMP) levels preserving the normal gut flora. The chain is Homeotic protein caudal (cad) from Drosophila melanogaster (Fruit fly).